Reading from the N-terminus, the 554-residue chain is Heterochromatin protein 1-binding protein 3 (554 aa).

N-acetylalanine is present on A2. S6 is subject to Phosphoserine. Disordered regions lie at residues 30-136 (LGEK…KTIP) and 142-161 (SASQ…SPRP). Residue T51 is modified to Phosphothreonine. Acidic residues predominate over residues 60-71 (GEEEKPEPDGSS). K64 is covalently cross-linked (Glycyl lysine isopeptide (Lys-Gly) (interchain with G-Cter in SUMO2)). Phosphothreonine occurs at positions 72 and 85. Positions 72–93 (EESISTVEEQENETPPATSSEA) are enriched in polar residues. The span at 94–129 (EQPKGEPESGEKEENNNKSAEEPKKDEKDQSKEKEK) shows a compositional bias: basic and acidic residues. Residue K97 forms a Glycyl lysine isopeptide (Lys-Gly) (interchain with G-Cter in SUMO2) linkage. Residues 142-156 (SASQLARAQRQTPMA) are compositionally biased toward polar residues. Phosphoserine is present on residues S144, S157, and S158. In terms of domain architecture, H15 1 spans 159–234 (PRPKMDAILT…GASGSFVVVQ (76 aa)). At K192 the chain carries N6-acetyllysine. The interval 229–254 (SFVVVQKSKPPQKSKNRKKGSALDPE) is disordered. The span at 238–248 (PPQKSKNRKKG) shows a compositional bias: basic residues. At S249 the chain carries Phosphoserine. The short motif at 255–259 (PQVKL) is the PxVxL motif element. H15 domains follow at residues 255–330 (PQVK…QLKK) and 337–413 (LGGS…QLSF). K258 is covalently cross-linked (Glycyl lysine isopeptide (Lys-Gly) (interchain with G-Cter in SUMO2)). The interval 420-554 (GVLFPKKESG…AMKKSFKTKK (135 aa)) is disordered. Positions 430 to 451 (GSDDEDEDDDDDESSEDSEDEE) are enriched in acidic residues. Phosphoserine is present on residues S443, S444, and S447. A compositionally biased stretch (polar residues) spans 464–475 (AKSQGKTASMKQ). Basic residues-rich tracts occupy residues 490-511 (GKVR…RKAR) and 544-554 (SAMKKSFKTKK).

Interacts (via PxVxL motif) with CBX5 (via Trp-174).

The protein resides in the nucleus. The protein localises to the chromosome. Functionally, component of heterochromatin that maintains heterochromatin integrity during G1/S progression and regulates the duration of G1 phase to critically influence cell proliferative capacity. May play a role in hypoxia-induced oncogenesis. The sequence is that of Heterochromatin protein 1-binding protein 3 (Hp1bp3) from Mus musculus (Mouse).